Reading from the N-terminus, the 199-residue chain is dITP/XTP pyrophosphatase (199 aa).

Residue 8–13 participates in substrate binding; it reads TRNKGK. Mg(2+) is bound by residues glutamate 41 and aspartate 70. Catalysis depends on aspartate 70, which acts as the Proton acceptor. Substrate is bound by residues serine 71, 153 to 156, lysine 176, and 181 to 182; these read FGYD and HR.

Belongs to the HAM1 NTPase family. Homodimer. It depends on Mg(2+) as a cofactor.

The catalysed reaction is XTP + H2O = XMP + diphosphate + H(+). It catalyses the reaction dITP + H2O = dIMP + diphosphate + H(+). The enzyme catalyses ITP + H2O = IMP + diphosphate + H(+). Pyrophosphatase that catalyzes the hydrolysis of nucleoside triphosphates to their monophosphate derivatives, with a high preference for the non-canonical purine nucleotides XTP (xanthosine triphosphate), dITP (deoxyinosine triphosphate) and ITP. Seems to function as a house-cleaning enzyme that removes non-canonical purine nucleotides from the nucleotide pool, thus preventing their incorporation into DNA/RNA and avoiding chromosomal lesions. This Geobacter sulfurreducens (strain ATCC 51573 / DSM 12127 / PCA) protein is dITP/XTP pyrophosphatase.